The primary structure comprises 1062 residues: Carbamoyl phosphate synthase large chain (1062 aa).

The interval 1–401 is carboxyphosphate synthetic domain; the sequence is MPKRTDIHKI…AMQKAVQSLE (401 aa). ATP-binding residues include R129, R169, G175, G176, K208, I210, E215, G241, I242, H243, Q284, and E298. An ATP-grasp 1 domain is found at 133-327; that stretch reads KELCQKLGEP…IAKMAAKIAI (195 aa). Mg(2+) contacts are provided by Q284, E298, and N300. The Mn(2+) site is built by Q284, E298, and N300. The interval 402–546 is oligomerization domain; sequence IDEKDLYSAK…YSTYDGENES (145 aa). Residues 547–929 are carbamoyl phosphate synthetic domain; the sequence is RKSGKKSVIV…ALYKAFAGAK (383 aa). In terms of domain architecture, ATP-grasp 2 spans 671-861; it reads DQIIKSLHLH…MAQVATRVIM (191 aa). ATP is bound by residues R707, D746, L748, E752, G777, V778, H779, S780, Q820, and E832. Residues Q820, E832, and N834 each contribute to the Mg(2+) site. Q820, E832, and N834 together coordinate Mn(2+). Positions 930–1062 constitute an MGS-like domain; the sequence is MQLPENGNVL…NRSFATDALK (133 aa). Residues 930 to 1062 are allosteric domain; that stretch reads MQLPENGNVL…NRSFATDALK (133 aa).

Belongs to the CarB family. In terms of assembly, composed of two chains; the small (or glutamine) chain promotes the hydrolysis of glutamine to ammonia, which is used by the large (or ammonia) chain to synthesize carbamoyl phosphate. Tetramer of heterodimers (alpha,beta)4. Mg(2+) serves as cofactor. Mn(2+) is required as a cofactor.

The enzyme catalyses hydrogencarbonate + L-glutamine + 2 ATP + H2O = carbamoyl phosphate + L-glutamate + 2 ADP + phosphate + 2 H(+). It carries out the reaction hydrogencarbonate + NH4(+) + 2 ATP = carbamoyl phosphate + 2 ADP + phosphate + 2 H(+). It participates in amino-acid biosynthesis; L-arginine biosynthesis; carbamoyl phosphate from bicarbonate: step 1/1. The protein operates within pyrimidine metabolism; UMP biosynthesis via de novo pathway; (S)-dihydroorotate from bicarbonate: step 1/3. Large subunit of the glutamine-dependent carbamoyl phosphate synthetase (CPSase). CPSase catalyzes the formation of carbamoyl phosphate from the ammonia moiety of glutamine, carbonate, and phosphate donated by ATP, constituting the first step of 2 biosynthetic pathways, one leading to arginine and/or urea and the other to pyrimidine nucleotides. The large subunit (synthetase) binds the substrates ammonia (free or transferred from glutamine from the small subunit), hydrogencarbonate and ATP and carries out an ATP-coupled ligase reaction, activating hydrogencarbonate by forming carboxy phosphate which reacts with ammonia to form carbamoyl phosphate. The polypeptide is Carbamoyl phosphate synthase large chain (Lactobacillus helveticus (strain DPC 4571)).